The following is a 310-amino-acid chain: Porphobilinogen deaminase (310 aa).

Cys-243 bears the S-(dipyrrolylmethanemethyl)cysteine mark.

Belongs to the HMBS family. Monomer. It depends on dipyrromethane as a cofactor.

It catalyses the reaction 4 porphobilinogen + H2O = hydroxymethylbilane + 4 NH4(+). It functions in the pathway porphyrin-containing compound metabolism; protoporphyrin-IX biosynthesis; coproporphyrinogen-III from 5-aminolevulinate: step 2/4. In terms of biological role, tetrapolymerization of the monopyrrole PBG into the hydroxymethylbilane pre-uroporphyrinogen in several discrete steps. The polypeptide is Porphobilinogen deaminase (Methylobacillus flagellatus (strain ATCC 51484 / DSM 6875 / VKM B-1610 / KT)).